The primary structure comprises 489 residues: Zeta-carotene desaturase (489 aa).

Belongs to the zeta carotene desaturase family. The cofactor is NAD(+). NADP(+) serves as cofactor. FAD is required as a cofactor.

It catalyses the reaction 9,9'-di-cis-zeta-carotene + 2 a quinone = 7,7',9,9'-tetra-cis-lycopene + 2 a quinol. It participates in carotenoid biosynthesis; lycopene biosynthesis. In terms of biological role, catalyzes the conversion of zeta-carotene to lycopene via the intermediary of neurosporene. It carries out two consecutive desaturations (introduction of double bonds) at positions C-7 and C-7'. The sequence is that of Zeta-carotene desaturase (crtQ) from Synechocystis sp. (strain ATCC 27184 / PCC 6803 / Kazusa).